A 482-amino-acid chain; its full sequence is Exodeoxyribonuclease I (482 aa).

Positions 13–194 (LFYDYETFGI…TSDVYATIEL (182 aa)) constitute an Exonuclease domain. The Mg(2+) site is built by Asp16, Glu18, and Asp187. Glu18 lines the substrate pocket. The 149-residue stretch at 203 to 351 (PKLFDFFFKY…LVKNVLLKKN (149 aa)) folds into the ExoI SH3-like domain. The ExoI C-terminal domain maps to 355-471 (NSLNVDLQIY…DLLKYVFKKY (117 aa)).

In terms of assembly, monomer. Interacts with ssb (via C-terminus); this interaction stimulates the exonuclease activity by recruiting the enzyme to its substrate. Mg(2+) is required as a cofactor.

The catalysed reaction is Exonucleolytic cleavage in the 3'- to 5'-direction to yield nucleoside 5'-phosphates.. Its function is as follows. Degrades single-stranded DNA (ssDNA) in a highly processive manner. Also functions as a DNA deoxyribophosphodiesterase that releases deoxyribose-phosphate moieties following the cleavage of DNA at an apurinic/apyrimidinic (AP) site by either an AP endonuclease or AP lyase. The chain is Exodeoxyribonuclease I (sbcB) from Buchnera aphidicola subsp. Schizaphis graminum (strain Sg).